Consider the following 399-residue polypeptide: CCA-adding enzyme (399 aa).

ATP-binding residues include glycine 32 and arginine 35. CTP is bound by residues glycine 32 and arginine 35. 2 residues coordinate Mg(2+): aspartate 45 and aspartate 47. Residues arginine 116, aspartate 159, arginine 162, arginine 165, and arginine 168 each coordinate ATP. Arginine 116, aspartate 159, arginine 162, arginine 165, and arginine 168 together coordinate CTP.

The protein belongs to the tRNA nucleotidyltransferase/poly(A) polymerase family. Bacterial CCA-adding enzyme type 3 subfamily. As to quaternary structure, homodimer. Mg(2+) is required as a cofactor.

It catalyses the reaction a tRNA precursor + 2 CTP + ATP = a tRNA with a 3' CCA end + 3 diphosphate. The catalysed reaction is a tRNA with a 3' CCA end + 2 CTP + ATP = a tRNA with a 3' CCACCA end + 3 diphosphate. Its function is as follows. Catalyzes the addition and repair of the essential 3'-terminal CCA sequence in tRNAs without using a nucleic acid template. Adds these three nucleotides in the order of C, C, and A to the tRNA nucleotide-73, using CTP and ATP as substrates and producing inorganic pyrophosphate. tRNA 3'-terminal CCA addition is required both for tRNA processing and repair. Also involved in tRNA surveillance by mediating tandem CCA addition to generate a CCACCA at the 3' terminus of unstable tRNAs. While stable tRNAs receive only 3'-terminal CCA, unstable tRNAs are marked with CCACCA and rapidly degraded. This chain is CCA-adding enzyme, found in Streptococcus gordonii (strain Challis / ATCC 35105 / BCRC 15272 / CH1 / DL1 / V288).